The chain runs to 248 residues: DNA repair protein RecO (248 aa).

It belongs to the RecO family.

Its function is as follows. Involved in DNA repair and RecF pathway recombination. The sequence is that of DNA repair protein RecO from Streptomyces avermitilis (strain ATCC 31267 / DSM 46492 / JCM 5070 / NBRC 14893 / NCIMB 12804 / NRRL 8165 / MA-4680).